A 285-amino-acid chain; its full sequence is Ret finger protein-like 4A (285 aa).

The RING-type; degenerate zinc-finger motif lies at 11-53 (CYFCFRYLENPVYLNCGYICCFQCLDSLEKSPEGDGVLCPNCS). Residues 78–276 (EPQLNFILTM…ISICPVMNPS (199 aa)) enclose the B30.2/SPRY domain.

In terms of assembly, interacts with PSMB1, UBE2A and CCNB1.

It is found in the cytoplasm. Its subcellular location is the nucleus. The polypeptide is Ret finger protein-like 4A (Rfpl4a) (Rattus norvegicus (Rat)).